Here is a 552-residue protein sequence, read N- to C-terminus: Enhanced filamentous growth protein (552 aa).

Disordered regions lie at residues 17–48, 70–93, and 121–180; these read NNGM…SQQQ, QGQP…QQQQ, and QLSQ…QPTP. A compositionally biased stretch (polar residues) spans 121 to 151; that stretch reads QLSQPQPQHYNGSNRNYTSAPSGAPIPSNST. Residues 204-310 enclose the HTH APSES-type domain; sequence RVTTTMWEDE…RDIKRVIQTG (107 aa). A DNA-binding region (H-T-H motif) is located at residues 238–259; that stretch reads GTKLLNVAQMTRGRRDGILKSE. Disordered regions lie at residues 327–384, 410–447, and 478–552; these read TSAS…SPVN, QYGQ…QQQM, and SSYP…KEEK. The span at 340–381 shows a compositional bias: low complexity; that stretch reads AAATTTAATAISKSSSGNGNSISATSGGSNVSGASGAGSTTS. Positions 419–434 are enriched in polar residues; that stretch reads KNQNTPASQPGSTTND. 2 stretches are compositionally biased toward low complexity: residues 435 to 447 and 478 to 504; these read QYLQ…QQQM and SSYP…DQQQ. Positions 516–546 are enriched in polar residues; it reads SVHQSPQVQSLTQGSVHPSPQQHQANQSAST.

This sequence belongs to the EFG1/PHD1/stuA family.

The protein localises to the nucleus. Its function is as follows. Putative transcription factor that stimulates pseudohyphal morphogenesis. The protein is Enhanced filamentous growth protein (EFG1) of Candida albicans (Yeast).